Consider the following 294-residue polypeptide: Extracellular metalloprotease TRV_07111 (294 aa).

Positions 1-19 are cleaved as a signal peptide; sequence MRFSVVFAAIAALSSVVTA. N-linked (GlcNAc...) asparagine glycans are attached at residues N49, N54, and N74. H185 provides a ligand contact to Zn(2+). Residue E186 is part of the active site. H189 lines the Zn(2+) pocket. C224 and C250 are joined by a disulfide.

It belongs to the peptidase M43B family.

It is found in the secreted. Functionally, secreted metalloproteinase that allows assimilation of proteinaceous substrates. Plays a pivotal role as a pathogenicity determinant during infections and contributes to the ability of the pathogen to persist within the mammalian host. The polypeptide is Extracellular metalloprotease TRV_07111 (Trichophyton verrucosum (strain HKI 0517)).